Here is a 466-residue protein sequence, read N- to C-terminus: Hepatocyte nuclear factor 3-alpha (466 aa).

The segment at residues 169–260 is a DNA-binding region (fork-head); sequence AKPPYSYISL…GNMFENGCYL (92 aa). The interval 251 to 288 is essential for DNA binding; the sequence is GNMFENGCYLRRQKRFKCEKQPGAGGGSGGGGSKGVPE. Residues 269–358 form a disordered region; sequence EKQPGAGGGS…ASSSAPPISS (90 aa). A compositionally biased stretch (gly residues) spans 273–284; the sequence is GAGGGSGGGGSK. Residues Ser-303 and Ser-327 each carry the phosphoserine modification. Low complexity-rich tracts occupy residues 318 to 328 and 344 to 358; these read GAPAPGPAASP and ELKSPASSSAPPISS.

Binds DNA as a monomer. Interacts with FOXA2. Interacts with NKX2-1. Interacts with HDAC7. Interacts with the histone H3-H4 heterodimer. Associates with nucleosomes containing histone H2A. Interacts with AR. Interacts with NR0B2. As to expression, liver.

The protein resides in the nucleus. Functionally, transcription factor that is involved in embryonic development, establishment of tissue-specific gene expression and regulation of gene expression in differentiated tissues. Is thought to act as a 'pioneer' factor opening the compacted chromatin for other proteins through interactions with nucleosomal core histones and thereby replacing linker histones at target enhancer and/or promoter sites. Binds DNA with the consensus sequence 5'-[AC]A[AT]T[AG]TT[GT][AG][CT]T[CT]-3'. Proposed to play a role in translating the epigenetic signatures into cell type-specific enhancer-driven transcriptional programs. Involved in glucose homeostasis; activates the GCG promoter. Involved in the development of multiple endoderm-derived organ systems such as the liver, pancreas, lungs and prostate; FOXA1 and FOXA2 seem to have at least in part redundant roles. Modulates the transcriptional activity of nuclear hormone receptors. Is required for maximal gene activation mediated by AR in the prostate. Negatively regulates AR transactivation via competition with coactivators such as NCOA2. Is involved in ESR1-mediated transcription. Involved in regulation of apoptosis. Involved in cell cycle regulation. Originally described as a transcription activator for a number of liver genes such as AFP, albumin, tyrosine aminotransferase, PEPCK, etc. Interacts with the cis-acting regulatory regions of these genes. In Rattus norvegicus (Rat), this protein is Hepatocyte nuclear factor 3-alpha (Foxa1).